The chain runs to 416 residues: Prostacyclin receptor (416 aa).

The Extracellular portion of the chain corresponds to 1–45 (MVASGGRPDGPPSITPESPLIVGGREWQGMAGSCWNITYVQDSVG). 2 disulfides stabilise this stretch: Cys-34–Cys-194 and Cys-121–Cys-199. Asn-36 carries an N-linked (GlcNAc...) asparagine glycan. Residues 46–67 (PATSTLMFVAGVVGNGLALGIL) traverse the membrane as a helical segment. Topologically, residues 68–80 (GARRRSHPSAFAV) are cytoplasmic. Residues 81–105 (LVTGLAVTDLLGTCFLSPAVFVAYA) traverse the membrane as a helical segment. Residues 106 to 123 (RNSSLLGLAHGGTMLCDT) are Extracellular-facing. Residues 124–144 (FAFAMTFFGLASTLILFAMAV) form a helical membrane-spanning segment. The Cytoplasmic portion of the chain corresponds to 145–163 (ERCLALSHPYLYAQLDGPR). A helical membrane pass occupies residues 164 to 187 (CARLALPAIYAFCCLFCSLPLLGL). At 188-215 (GEHQQYCPGSWCFIRMRSPQPGGCAFSL) the chain is on the extracellular side. The helical transmembrane segment at 216–237 (AYASLMALLVTSIFFCNGSVTL) threads the bilayer. Residues 238–264 (SLCHMYRQQRRHHGSFVPTSRAREDEV) are Cytoplasmic-facing. A helical transmembrane segment spans residues 265 to 289 (YHLILLALMTGIMAVCSLPLTIRGF). At 290–302 (TQAIAPDSREMGD) the chain is on the extracellular side. A helical membrane pass occupies residues 303-323 (LHAFRFNAFNPILDPWVFILF). Residues 324-416 (RKAVFQRLKF…TEAVVACSLC (93 aa)) are Cytoplasmic-facing. Residue Ser-366 is modified to Phosphoserine. Cys-413 bears the Cysteine methyl ester mark. Residue Cys-413 is the site of S-farnesyl cysteine attachment. Residues 414–416 (SLC) constitute a propeptide, removed in mature form.

This sequence belongs to the G-protein coupled receptor 1 family. In terms of assembly, interacts (non-isoprenylated C-terminus) with PDZK1. Post-translationally, isoprenylation does not influence ligand binding but is required for efficient coupling to the effectors adenylyl cyclase and phospholipase C.

It is found in the cell membrane. Functionally, receptor for prostacyclin (prostaglandin I2 or PGI2). The activity of this receptor is mediated by G(s) proteins which activate adenylate cyclase. This Rattus norvegicus (Rat) protein is Prostacyclin receptor (Ptgir).